Consider the following 462-residue polypeptide: Retinoic acid receptor alpha (462 aa).

The tract at residues 1–87 (MASNSSSCPT…PPPLPRIYKP (87 aa)) is modulating. The span at 52-64 (GYSTPSPATIETQ) shows a compositional bias: polar residues. The interval 52–77 (GYSTPSPATIETQSSSSEEIVPSPPS) is disordered. Ser77 is subject to Phosphoserine; by CDK7. NR C4-type zinc fingers lie at residues 88-108 (CFVC…CEGC) and 124-148 (CHRD…LQKC). Positions 88–153 (CFVCQDKSSG…RLQKCFEVGM (66 aa)) form a DNA-binding region, nuclear receptor. Ser96 bears the Phosphoserine; by PKB/AKT1 mark. A hinge region spans residues 154-182 (SKESVRNDRNKKKKEVPKPECSESYTLTP). Residues Lys166 and Lys171 each participate in a glycyl lysine isopeptide (Lys-Gly) (interchain with G-Cter in SUMO) cross-link. In terms of domain architecture, NR LBD spans 183 to 417 (EVGELIEKVR…PLIQEMLENS (235 aa)). The residue at position 219 (Ser219) is a Phosphoserine; by PKA. Residue Cys235 participates in all-trans-retinoate binding. Positions 254–258 (IADQI) match the UBR5-degron motif. An all-trans-retinoate-binding site is contributed by Ser287. Ser369 is subject to Phosphoserine; by PKA. Residue Lys399 forms a Glycyl lysine isopeptide (Lys-Gly) (interchain with G-Cter in SUMO) linkage. The segment at 404-419 (GSMPPLIQEMLENSEG) is required for binding corepressor NCOR1. The short motif at 408–416 (PLIQEMLEN) is the 9aaTAD element. The interval 419–462 (GLDTLSGQPGGGGRDGGGLAPPPGSCSPSLSPSSNRSSPATHSP) is disordered. The segment covering 426–437 (QPGGGGRDGGGL) has biased composition (gly residues). Positions 444-462 (CSPSLSPSSNRSSPATHSP) are enriched in low complexity.

It belongs to the nuclear hormone receptor family. NR1 subfamily. As to quaternary structure, heterodimer; with RXRA (via C-terminus); association with RXRA is enhanced by pulsatile shear stress. Binds DNA preferentially as a heterodimer. RXRA serves as enhancer to induce RARA binding to RARE. Interacts with RXRG. Interacts with coactivators NCOA3 and NCOA6. Interacts with NCOA7; the interaction requires ligand-binding. Interacts (via the ligand-binding domain) with PRAME; the interaction is ligand (retinoic acid)-dependent. Interacts with AKT1; the interaction phosphorylates RARA and represses transactivation. Interacts with PRKAR1A; the interaction negatively regulates RARA transcriptional activity. Interacts with NCOR1 and NCOR2. Interacts with PRMT2. Interacts with LRIF1. Interacts with ASXL1 and NCOA1. Interacts with ACTN4. In a complex with HDAC3, HDAC5 and HDAC7; the HDACs serve as corepressors of RARA, causing its deacetylation and inhibition of RARE DNA element binding; association with HDAC3, HDAC5 and HDAC7 is increased upon oscillatory shear stress. Interacts with CDK7. In the absence of hormonal ligand, interacts with TACC1. Phosphorylated on serine and threonine residues. Phosphorylation does not change during cell cycle. Phosphorylation on Ser-77 is crucial for transcriptional activity. Phosphorylation by AKT1 is required for the repressor activity but has no effect on DNA binding, protein stability nor subcellular localization. Phosphorylated by PKA in vitro. This phosphorylation on Ser-219 and Ser-369 is critical for ligand binding, nuclear localization and transcriptional activity in response to FSH signaling. Post-translationally, sumoylated with SUMO2, mainly on Lys-399 which is also required for SENP6 binding. On all-trans retinoic acid (ATRA) binding, a conformational change may occur that allows sumoylation on two additional site, Lys-166 and Lys-171. Probably desumoylated by SENP6. Sumoylation levels determine nuclear localization and regulate ATRA-mediated transcriptional activity. In terms of processing, trimethylation enhances heterodimerization with RXRA and positively modulates the transcriptional activation. Ubiquitinated by UBR5, leading to its degradation: UBR5 specifically recognizes and binds ligand-bound RARA when it is not associated with coactivators (NCOAs). In presence of NCOAs, the UBR5-degron is not accessible, preventing its ubiquitination and degradation. Post-translationally, acetylated; acetylation is increased upon pulsatile shear stress and decreased upon oscillatory shear stress. Expressed in monocytes.

It is found in the nucleus. The protein resides in the cytoplasm. In terms of biological role, receptor for retinoic acid. Retinoic acid receptors bind as heterodimers to their target response elements in response to their ligands, all-trans or 9-cis retinoic acid, and regulate gene expression in various biological processes. The RXR/RAR heterodimers bind to the retinoic acid response elements (RARE) composed of tandem 5'-AGGTCA-3' sites known as DR1-DR5. In the absence of ligand, the RXR-RAR heterodimers associate with a multiprotein complex containing transcription corepressors that induce histone deacetylation, chromatin condensation and transcriptional suppression. On ligand binding, the corepressors dissociate from the receptors and associate with the coactivators leading to transcriptional activation. Formation of a complex with histone deacetylases might lead to inhibition of RARE DNA element binding and to transcriptional repression. Transcriptional activation and RARE DNA element binding might be supported by the transcription factor KLF2. RARA plays an essential role in the regulation of retinoic acid-induced germ cell development during spermatogenesis. Has a role in the survival of early spermatocytes at the beginning prophase of meiosis. In Sertoli cells, may promote the survival and development of early meiotic prophase spermatocytes. In concert with RARG, required for skeletal growth, matrix homeostasis and growth plate function. Together with RXRA, positively regulates microRNA-10a expression, thereby inhibiting the GATA6/VCAM1 signaling response to pulsatile shear stress in vascular endothelial cells. In association with HDAC3, HDAC5 and HDAC7 corepressors, plays a role in the repression of microRNA-10a and thereby promotes the inflammatory response. This chain is Retinoic acid receptor alpha (RARA), found in Homo sapiens (Human).